Reading from the N-terminus, the 261-residue chain is MLSNSDSKHGQKAYWCVVSGSDLWLVDGQLPLATSNELNLVAEKAQKIGSYNNHPVMWLNEADVEQSLEMHSLRECLHFPEPLFLLMSKAIQYGHMTQTMRFCPQCGGRNHLNHNQLAMQCGECRTLHYPRIFPCIIVAVRKQQHILLAQHPRHRSGMYTVIAGFVEVGETLEQCVAREVKEETGIEVTNIRYFGSQPWAFPSSMMMAFLADYHAGELKPDYSELADAKWFTSDNLPPVAPTGTIARALIEQTLLNMRSDS.

Residue arginine 74 participates in substrate binding. Zn(2+) is bound by residues cysteine 103, cysteine 106, cysteine 121, and cysteine 124. Tyrosine 129 contributes to the substrate binding site. Residues 130–253 (PRIFPCIIVA…TIARALIEQT (124 aa)) form the Nudix hydrolase domain. A divalent metal cation-binding residues include alanine 163, glutamate 179, and glutamate 183. The short motif at 164–185 (GFVEVGETLEQCVAREVKEETG) is the Nudix box element. 197-204 (QPWAFPSS) is a binding site for substrate. Glutamate 224 is a binding site for a divalent metal cation. Alanine 246 contacts substrate.

This sequence belongs to the Nudix hydrolase family. NudC subfamily. As to quaternary structure, homodimer. Mg(2+) is required as a cofactor. The cofactor is Mn(2+). It depends on Zn(2+) as a cofactor.

It carries out the reaction a 5'-end NAD(+)-phospho-ribonucleoside in mRNA + H2O = a 5'-end phospho-adenosine-phospho-ribonucleoside in mRNA + beta-nicotinamide D-ribonucleotide + 2 H(+). The enzyme catalyses NAD(+) + H2O = beta-nicotinamide D-ribonucleotide + AMP + 2 H(+). It catalyses the reaction NADH + H2O = reduced beta-nicotinamide D-ribonucleotide + AMP + 2 H(+). Functionally, mRNA decapping enzyme that specifically removes the nicotinamide adenine dinucleotide (NAD) cap from a subset of mRNAs by hydrolyzing the diphosphate linkage to produce nicotinamide mononucleotide (NMN) and 5' monophosphate mRNA. The NAD-cap is present at the 5'-end of some mRNAs and stabilizes RNA against 5'-processing. Has preference for mRNAs with a 5'-end purine. Catalyzes the hydrolysis of a broad range of dinucleotide pyrophosphates. This chain is NAD-capped RNA hydrolase NudC, found in Vibrio vulnificus (strain CMCP6).